We begin with the raw amino-acid sequence, 160 residues long: Urease accessory protein UreE (160 aa).

This sequence belongs to the UreE family.

Its subcellular location is the cytoplasm. Functionally, involved in urease metallocenter assembly. Binds nickel. Probably functions as a nickel donor during metallocenter assembly. The chain is Urease accessory protein UreE from Acinetobacter baumannii (strain AB307-0294).